The primary structure comprises 135 residues: Protein Wnt-7a (135 aa).

Intrachain disulfides connect C3–C17 and C5–C12. Residue S9 is the site of O-palmitoleoyl serine; by PORCN attachment. Residues V41 to T69 form a disordered linker region. 4 cysteine pairs are disulfide-bonded: C81-C112, C97-C107, C111-C134, and C130-C131. The N-linked (GlcNAc...) asparagine glycan is linked to N98.

It belongs to the Wnt family. Palmitoleoylation is required for efficient binding to frizzled receptors. Depalmitoleoylation leads to Wnt signaling pathway inhibition. In terms of tissue distribution, in embryo, in brain and ventral neural tube; in adults, in brain.

Its subcellular location is the secreted. It localises to the extracellular space. The protein resides in the extracellular matrix. Functionally, ligand for members of the frizzled family of seven transmembrane receptors that functions in the canonical Wnt/beta-catenin signaling pathway. Plays an important role in embryonic development, including dorsal versus ventral patterning during limb development, skeleton development and urogenital tract development. Required for central nervous system (CNS) angiogenesis and blood-brain barrier regulation. This Xenopus laevis (African clawed frog) protein is Protein Wnt-7a (wnt7a).